The chain runs to 329 residues: MTTNNSNDNNKRYGIIKQQLQQQQQQHHQQHEQHSRLVEMTAGCGAGFMASLFTTPLDVIKTTLQVDNSSNKTIMSTVKSILDRKGGVKNLYLGLKPTLVGQIPSWAVYFSTYTFCKELFTKENDKHSLLEKESPLIFMTSAIIAGAATSICTSPIWLIKTRFITQEMVGRQKKYRGIVHSMVSIYHEEGFRGLYKGLGPSLLGVLHVGVQFPLYEKFKSILKEKNKNKELGIVEIMIASSVSKIIASVVAYPHEVLRARSQDSSPDSPNRTYRGNIIQMFKQIVREEGWRGLYRGMGVNLLRVTPSCVITFTSYEYIKKFLSQNQNHF.

Residues 1–39 (MTTNNSNDNNKRYGIIKQQLQQQQQQHHQQHEQHSRLVE) are Mitochondrial intermembrane-facing. Solcar repeat units lie at residues 34 to 119 (HSRL…CKEL), 133 to 221 (ESPL…FKSI), and 231 to 321 (LGIV…IKKF). Residues 40-60 (MTAGCGAGFMASLFTTPLDVI) form a helical membrane-spanning segment. The Mitochondrial matrix portion of the chain corresponds to 61–90 (KTTLQVDNSSNKTIMSTVKSILDRKGGVKN). Residues 91-111 (LYLGLKPTLVGQIPSWAVYFS) traverse the membrane as a helical segment. At 112–135 (TYTFCKELFTKENDKHSLLEKESP) the chain is on the mitochondrial intermembrane side. Residues 136–156 (LIFMTSAIIAGAATSICTSPI) form a helical membrane-spanning segment. The Mitochondrial matrix segment spans residues 157 to 193 (WLIKTRFITQEMVGRQKKYRGIVHSMVSIYHEEGFRG). The helical transmembrane segment at 194–214 (LYKGLGPSLLGVLHVGVQFPL) threads the bilayer. Residues 215 to 230 (YEKFKSILKEKNKNKE) lie on the Mitochondrial intermembrane side of the membrane. Residues 231–251 (LGIVEIMIASSVSKIIASVVA) form a helical membrane-spanning segment. Residues 252–296 (YPHEVLRARSQDSSPDSPNRTYRGNIIQMFKQIVREEGWRGLYRG) are Mitochondrial matrix-facing. Residues 297 to 315 (MGVNLLRVTPSCVITFTSY) traverse the membrane as a helical segment. At 316 to 329 (EYIKKFLSQNQNHF) the chain is on the mitochondrial intermembrane side.

The protein belongs to the mitochondrial carrier (TC 2.A.29) family.

The protein resides in the mitochondrion inner membrane. Mitochondrial solute carriers shuttle metabolites, nucleotides, and cofactors through the mitochondrial inner membrane. In Dictyostelium discoideum (Social amoeba), this protein is Mitochondrial substrate carrier family protein W (mcfW).